The primary structure comprises 186 residues: Ribosome-recycling factor (186 aa).

It belongs to the RRF family.

It localises to the cytoplasm. Responsible for the release of ribosomes from messenger RNA at the termination of protein biosynthesis. May increase the efficiency of translation by recycling ribosomes from one round of translation to another. In Polaromonas naphthalenivorans (strain CJ2), this protein is Ribosome-recycling factor.